A 238-amino-acid polypeptide reads, in one-letter code: tRNA (guanine-N(1)-)-methyltransferase (238 aa).

Residues G112 and 131–136 (LGDFIL) each bind S-adenosyl-L-methionine.

This sequence belongs to the RNA methyltransferase TrmD family. In terms of assembly, homodimer.

The protein resides in the cytoplasm. The enzyme catalyses guanosine(37) in tRNA + S-adenosyl-L-methionine = N(1)-methylguanosine(37) in tRNA + S-adenosyl-L-homocysteine + H(+). Specifically methylates guanosine-37 in various tRNAs. This chain is tRNA (guanine-N(1)-)-methyltransferase, found in Nostoc punctiforme (strain ATCC 29133 / PCC 73102).